We begin with the raw amino-acid sequence, 235 residues long: STARD3 N-terminal-like protein (235 aa).

At methionine 1 the chain carries N-acetylmethionine. Positions 1–20 (MNHLPEHMENTLTGSQSSHA) are disordered. The Cytoplasmic segment spans residues 1–53 (MNHLPEHMENTLTGSQSSHASLRDIHSINPAQLMARIESYEGREKKGISDVRR). Residues 10–20 (NTLTGSQSSHA) show a composition bias toward polar residues. Residues serine 15, serine 21, and serine 27 each carry the phosphoserine modification. Positions 48-218 (ISDVRRTFCL…YSPPESEAGS (171 aa)) constitute an MENTAL domain. A helical membrane pass occupies residues 54 to 74 (TFCLFVTFDLLFVTLLWIIEL). Residues 75 to 97 (NVNGGIENTLKKEVIHYDYYSSY) are Extracellular-facing. A helical transmembrane segment spans residues 98 to 118 (FDIFLLAVFRFKVLILGYAVC). The Cytoplasmic segment spans residues 119-122 (RLRH). The helical transmembrane segment at 123 to 143 (WWAIALTTAVTSAFLLAKVIL) threads the bilayer. The Extracellular portion of the chain corresponds to 144–150 (SKLFSQG). The helical transmembrane segment at 151–171 (AFGYVLPIISFILAWIETWFL) threads the bilayer. Over 172–235 (DFKVLPQEAE…QESEKPLLEL (64 aa)) the chain is Cytoplasmic. Phosphoserine is present on serine 193. Residues 202 to 235 (GLSDGQFYSPPESEAGSEEEAEEKQESEKPLLEL) are disordered. Residues 208-213 (FYSPPE) carry the FFAT motif. The segment covering 225-235 (KQESEKPLLEL) has biased composition (basic and acidic residues).

Belongs to the STARD3 family. As to quaternary structure, homodimer. Interacts (via the MENTAL domain) with STARD3NL. Interacts (via FFAT motif) with VAPA. Interacts (via FFAT motif) with VAPB. Interacts (via FFAT motif) with MOSPD2 (via MSP domain).

It localises to the late endosome membrane. Tethering protein that creates contact site between the endoplasmic reticulum and late endosomes: localizes to late endosome membranes and contacts the endoplasmic reticulum via interaction with VAPA and VAPB. The protein is STARD3 N-terminal-like protein of Mus musculus (Mouse).